A 159-amino-acid polypeptide reads, in one-letter code: Serine-protein kinase RsbW (159 aa).

This sequence belongs to the anti-sigma-factor family.

It catalyses the reaction L-seryl-[protein] + ATP = O-phospho-L-seryl-[protein] + ADP + H(+). It carries out the reaction L-threonyl-[protein] + ATP = O-phospho-L-threonyl-[protein] + ADP + H(+). Negative regulator of sigma-B activity. Phosphorylates and inactivates its specific antagonist protein, RsbV. Upon phosphorylation of RsbV, RsbW is released and binds to sigma-B, thereby blocking its ability to form an RNA polymerase holoenzyme (E-sigma-B). The sequence is that of Serine-protein kinase RsbW from Staphylococcus aureus (strain MSSA476).